The following is a 385-amino-acid chain: 1-deoxy-D-xylulose 5-phosphate reductoisomerase 1 (385 aa).

NADPH is bound by residues Thr11, Gly12, Ser13, Ile14, Asn39, and Asn122. Residue Lys123 participates in 1-deoxy-D-xylulose 5-phosphate binding. Glu124 is an NADPH binding site. Asp148 is a binding site for Mn(2+). 1-deoxy-D-xylulose 5-phosphate contacts are provided by Ser149, Glu150, Ser174, and His197. Mn(2+) is bound at residue Glu150. Gly203 serves as a coordination point for NADPH. Residues Ser210, Asn215, Lys216, and Glu219 each coordinate 1-deoxy-D-xylulose 5-phosphate. Residue Glu219 coordinates Mn(2+).

Belongs to the DXR family. Mg(2+) is required as a cofactor. Mn(2+) serves as cofactor.

The catalysed reaction is 2-C-methyl-D-erythritol 4-phosphate + NADP(+) = 1-deoxy-D-xylulose 5-phosphate + NADPH + H(+). It functions in the pathway isoprenoid biosynthesis; isopentenyl diphosphate biosynthesis via DXP pathway; isopentenyl diphosphate from 1-deoxy-D-xylulose 5-phosphate: step 1/6. Functionally, catalyzes the NADPH-dependent rearrangement and reduction of 1-deoxy-D-xylulose-5-phosphate (DXP) to 2-C-methyl-D-erythritol 4-phosphate (MEP). The protein is 1-deoxy-D-xylulose 5-phosphate reductoisomerase 1 of Bacillus thuringiensis subsp. konkukian (strain 97-27).